The following is a 402-amino-acid chain: Mitochondrial inner membrane protein OXA1 (402 aa).

The transit peptide at 1–42 directs the protein to the mitochondrion; it reads MFKLTSRLVTSRFAASSRLATARTIVLPRPHPSWISFQAKRF. Topologically, residues 43-118 are mitochondrial intermembrane; that stretch reads NSTGPNANDV…PSDIIQHVLE (76 aa). The chain crosses the membrane as a helical span at residues 119 to 139; that stretch reads AVHVYSGLPWWGTIAATTILI. Residues 140-199 lie on the Mitochondrial matrix side of the membrane; that stretch reads RCLMFPLYVKSSDTVARNSHIKPELDALNNKLMSTTDLQQGQLVAMQRKKLLSSHGIKNR. Residues 200-220 form a helical membrane-spanning segment; the sequence is WLAAPMLQIPIALGFFNALRH. The Mitochondrial intermembrane portion of the chain corresponds to 221 to 239; it reads MANYPVDGFANQGVAWFTD. Residues 240–260 traverse the membrane as a helical segment; that stretch reads LTQADPYLGLQVITAAVFISF. Over 261-275 the chain is Mitochondrial matrix; it reads TRLGGETGAQQFSSP. Residues 276–292 form a helical membrane-spanning segment; sequence MKRLFTILPIISIPATM. The Mitochondrial intermembrane segment spans residues 293 to 297; sequence NLSSA. A helical transmembrane segment spans residues 298–316; it reads VVLYFAFNGAFSVLQTMIL. Residues 317–402 are Mitochondrial matrix-facing; that stretch reads RNKWVRSKLK…HKSNFINNKK (86 aa). The segment covering 366–385 has biased composition (basic and acidic residues); that stretch reads RQLMQDNEKKLQESFKEKRQ. The disordered stretch occupies residues 366-386; it reads RQLMQDNEKKLQESFKEKRQN.

It belongs to the OXA1/ALB3/YidC family. Interacts with the large ribosome subunit of mitochondrial ribosome. Interacts directly with MRP20. Interacts with OXA1.

It is found in the mitochondrion inner membrane. In terms of biological role, mitochondrial inner membrane insertase that mediates the insertion of both mitochondrion-encoded precursors and nuclear-encoded proteins from the matrix into the inner membrane. Links mitoribosomes with the inner membrane. Forms pores capable of accommodating translocating protein segments. Essential for the activity and assembly of cytochrome c oxidase. Plays a central role in the translocation and export of the N-terminal part of the COX2 protein into the mitochondrial intermembrane space. The polypeptide is Mitochondrial inner membrane protein OXA1 (Saccharomyces cerevisiae (strain ATCC 204508 / S288c) (Baker's yeast)).